Reading from the N-terminus, the 422-residue chain is Large ribosomal subunit protein uL4 (422 aa).

The residue at position 2 (Ala-2) is an N-acetylalanine. Residue Lys-14 is modified to N6-acetyllysine. Arg-97 carries the omega-N-methylarginine modification. Lys-106 bears the N6-acetyllysine mark. Lys-239 participates in a covalent cross-link: Glycyl lysine isopeptide (Lys-Gly) (interchain with G-Cter in SUMO2). Lys-259 is subject to N6-acetyllysine. Thr-266 is modified (phosphothreonine). Residues Ser-290 and Ser-295 each carry the phosphoserine modification. Position 300 is a citrulline (Arg-300). A Glycyl lysine isopeptide (Lys-Gly) (interchain with G-Cter in SUMO2) cross-link involves residue Lys-327. 2 positions are modified to N6-acetyllysine: Lys-333 and Lys-353. The tract at residues 359–422 (EAKSDQKGVQ…PTSEEKKAAA (64 aa)) is disordered. Residue Lys-361 is modified to N6-acetyllysine; alternate. Lys-361 is covalently cross-linked (Glycyl lysine isopeptide (Lys-Gly) (interchain with G-Cter in SUMO1); alternate). Ser-362 carries the phosphoserine modification. 2 stretches are compositionally biased toward basic and acidic residues: residues 376-385 (NKEKKAVGDK) and 402-422 (PAAEKKPTEKKPTSEEKKAAA).

It belongs to the universal ribosomal protein uL4 family. As to quaternary structure, component of the large ribosomal subunit. May bind IPO9 with low affinity. Interacts with RBM3. In terms of processing, citrullinated by PADI4.

It localises to the cytoplasm. Component of the large ribosomal subunit. The ribosome is a large ribonucleoprotein complex responsible for the synthesis of proteins in the cell. The sequence is that of Large ribosomal subunit protein uL4 (RPL4) from Bos taurus (Bovine).